Reading from the N-terminus, the 210-residue chain is Homeobox protein Rhox5 (210 aa).

The interval 1–119 (MEAEGSSRKV…GNPGGRQMPL (119 aa)) is disordered. Positions 17 to 30 (GVKEDSEEQHDVKA) are enriched in basic and acidic residues. A compositionally biased stretch (gly residues) spans 47–79 (GQPGVGAVGTEGEGEELNGGKGHFGPGAPGPMG). Residues 117 to 175 (MPLQGSRFAQHRLRELESILQRTNSFDVPREDLDRLMDACVSRVQNWFKIRRAAARRTR) constitute a DNA-binding region (homeobox; atypical).

It localises to the nucleus. In terms of biological role, transcription factor required for differentiation of embryonic stem cells (ESCs) into primordial germ cells. The protein is Homeobox protein Rhox5 (Rhox5) of Mus musculus (Mouse).